A 374-amino-acid polypeptide reads, in one-letter code: Putative glutamate--cysteine ligase 2 (374 aa).

The protein belongs to the glutamate--cysteine ligase type 2 family. YbdK subfamily.

The enzyme catalyses L-cysteine + L-glutamate + ATP = gamma-L-glutamyl-L-cysteine + ADP + phosphate + H(+). ATP-dependent carboxylate-amine ligase which exhibits weak glutamate--cysteine ligase activity. This chain is Putative glutamate--cysteine ligase 2, found in Acidovorax sp. (strain JS42).